A 267-amino-acid chain; its full sequence is 3-methyl-2-oxobutanoate hydroxymethyltransferase (267 aa).

Mg(2+)-binding residues include Asp-45 and Asp-84. 3-methyl-2-oxobutanoate is bound by residues 45–46 (DS), Asp-84, and Lys-113. A Mg(2+)-binding site is contributed by Glu-115. The active-site Proton acceptor is the Glu-182.

This sequence belongs to the PanB family. Homodecamer; pentamer of dimers. Mg(2+) serves as cofactor.

Its subcellular location is the cytoplasm. The enzyme catalyses 3-methyl-2-oxobutanoate + (6R)-5,10-methylene-5,6,7,8-tetrahydrofolate + H2O = 2-dehydropantoate + (6S)-5,6,7,8-tetrahydrofolate. It participates in cofactor biosynthesis; coenzyme A biosynthesis. Its function is as follows. Catalyzes the reversible reaction in which hydroxymethyl group from 5,10-methylenetetrahydrofolate is transferred onto alpha-ketoisovalerate to form ketopantoate. In Saccharolobus islandicus (strain Y.G.57.14 / Yellowstone #1) (Sulfolobus islandicus), this protein is 3-methyl-2-oxobutanoate hydroxymethyltransferase.